Reading from the N-terminus, the 302-residue chain is N-acetyl-D-glucosamine kinase (302 aa).

Residues 4-11 and 133-140 contribute to the ATP site; these read GFDVGGTK and GFGGGLVY. Zn(2+) contacts are provided by H157, C177, C179, and C184.

This sequence belongs to the ROK (NagC/XylR) family. NagK subfamily.

The catalysed reaction is N-acetyl-D-glucosamine + ATP = N-acetyl-D-glucosamine 6-phosphate + ADP + H(+). It participates in cell wall biogenesis; peptidoglycan recycling. In terms of biological role, catalyzes the phosphorylation of N-acetyl-D-glucosamine (GlcNAc) derived from cell-wall degradation, yielding GlcNAc-6-P. This is N-acetyl-D-glucosamine kinase from Vibrio cholerae serotype O1 (strain ATCC 39315 / El Tor Inaba N16961).